The chain runs to 249 residues: Aspartate/glutamate leucyltransferase (249 aa).

It belongs to the R-transferase family. Bpt subfamily.

The protein localises to the cytoplasm. It catalyses the reaction N-terminal L-glutamyl-[protein] + L-leucyl-tRNA(Leu) = N-terminal L-leucyl-L-glutamyl-[protein] + tRNA(Leu) + H(+). It carries out the reaction N-terminal L-aspartyl-[protein] + L-leucyl-tRNA(Leu) = N-terminal L-leucyl-L-aspartyl-[protein] + tRNA(Leu) + H(+). Functionally, functions in the N-end rule pathway of protein degradation where it conjugates Leu from its aminoacyl-tRNA to the N-termini of proteins containing an N-terminal aspartate or glutamate. In Brucella anthropi (strain ATCC 49188 / DSM 6882 / CCUG 24695 / JCM 21032 / LMG 3331 / NBRC 15819 / NCTC 12168 / Alc 37) (Ochrobactrum anthropi), this protein is Aspartate/glutamate leucyltransferase.